The following is a 705-amino-acid chain: Polyribonucleotide nucleotidyltransferase (705 aa).

Residues Asp-486 and Asp-492 each coordinate Mg(2+). The region spanning 553-612 is the KH domain; the sequence is PRIYTMKINPEKIKDVIGKGGSVIRALTDETGTTIEIEDDGTIKIAATDGDKAKHAIRRI. The 69-residue stretch at 622–690 folds into the S1 motif domain; sequence GRIYAGKVTR…RQGRIRLSIK (69 aa).

This sequence belongs to the polyribonucleotide nucleotidyltransferase family. Component of the RNA degradosome, which is a multiprotein complex involved in RNA processing and mRNA degradation. Requires Mg(2+) as cofactor.

Its subcellular location is the cytoplasm. The enzyme catalyses RNA(n+1) + phosphate = RNA(n) + a ribonucleoside 5'-diphosphate. Its function is as follows. Involved in mRNA degradation. Catalyzes the phosphorolysis of single-stranded polyribonucleotides processively in the 3'- to 5'-direction. The sequence is that of Polyribonucleotide nucleotidyltransferase from Yersinia pseudotuberculosis serotype O:3 (strain YPIII).